The sequence spans 391 residues: Glycerol-3-phosphate dehydrogenase [NAD(+)] (391 aa).

NAD(+) is bound by residues 46–51 (GSGNWG), F78, and F134. Substrate is bound at residue K157. NAD(+) is bound at residue A190. K250 acts as the Proton acceptor in catalysis. Residues R315 and Q344 each coordinate NAD(+). 315 to 316 (RN) serves as a coordination point for substrate.

Belongs to the NAD-dependent glycerol-3-phosphate dehydrogenase family.

The catalysed reaction is sn-glycerol 3-phosphate + NAD(+) = dihydroxyacetone phosphate + NADH + H(+). The protein is Glycerol-3-phosphate dehydrogenase [NAD(+)] (GPD) of Candida tropicalis (Yeast).